The following is a 376-amino-acid chain: Phytanoyl-CoA hydroxylase-interacting protein-like (376 aa).

S12 and S15 each carry phosphoserine. N23 carries N-linked (GlcNAc...) asparagine glycosylation. S25 is modified (phosphoserine). An N-linked (GlcNAc...) asparagine glycan is attached at N37. The 110-residue stretch at 52–161 (VPHNIKISNI…EIIEFCTADY (110 aa)) folds into the Fibronectin type-III domain.

It belongs to the PHYHIP family.

Its function is as follows. May play a role in the development of the central system. This Homo sapiens (Human) protein is Phytanoyl-CoA hydroxylase-interacting protein-like (PHYHIPL).